A 181-amino-acid polypeptide reads, in one-letter code: Oligoribonuclease (181 aa).

Residues 8-171 form the Exonuclease domain; it reads LIWIDLEMTG…DDIRESVAEL (164 aa). Tyr-129 is an active-site residue.

The protein belongs to the oligoribonuclease family. As to quaternary structure, homodimer.

The protein resides in the cytoplasm. Its function is as follows. 3'-to-5' exoribonuclease specific for small oligoribonucleotides. The chain is Oligoribonuclease from Escherichia coli O139:H28 (strain E24377A / ETEC).